Consider the following 367-residue polypeptide: Pepsin A (367 aa).

The propeptide at 1-42 (SIHRVPLKKGKSLRKQLKDHGLLEDFLKKHPYNPASKYHPVL) is activation peptide. The 306-residue stretch at 59–364 (YYGTISIGTP…DRANNKVGLS (306 aa)) folds into the Peptidase A1 domain. Residue Asp77 is part of the active site. Cys90 and Cys95 are disulfide-bonded. N-linked (GlcNAc...) asparagine glycosylation occurs at Asn113. Cys251 and Cys255 are joined by a disulfide. Residue Asp260 is part of the active site. The cysteines at positions 290 and 323 are disulfide-linked.

This sequence belongs to the peptidase A1 family.

It carries out the reaction Preferential cleavage: hydrophobic, preferably aromatic, residues in P1 and P1' positions. Cleaves 1-Phe-|-Val-2, 4-Gln-|-His-5, 13-Glu-|-Ala-14, 14-Ala-|-Leu-15, 15-Leu-|-Tyr-16, 16-Tyr-|-Leu-17, 23-Gly-|-Phe-24, 24-Phe-|-Phe-25 and 25-Phe-|-Tyr-26 bonds in the B chain of insulin.. Shows particularly broad specificity; although bonds involving phenylalanine and leucine are preferred, many others are also cleaved to some extent. The protein is Pepsin A (PGA) of Gallus gallus (Chicken).